The following is a 275-amino-acid chain: Phosphatidylglycerol--prolipoprotein diacylglyceryl transferase (275 aa).

A run of 4 helical transmembrane segments spans residues 20 to 40, 58 to 78, 88 to 108, and 118 to 138; these read FTIH…LLLA, LLWA…VFQW, IIAI…GFIV, and LSSW…QGIG. R139 is a binding site for a 1,2-diacyl-sn-glycero-3-phospho-(1'-sn-glycerol). Helical transmembrane passes span 209 to 229 and 239 to 259; these read GEIF…IEGM and IRIS…ILII.

It belongs to the Lgt family.

The protein resides in the cell membrane. It catalyses the reaction L-cysteinyl-[prolipoprotein] + a 1,2-diacyl-sn-glycero-3-phospho-(1'-sn-glycerol) = an S-1,2-diacyl-sn-glyceryl-L-cysteinyl-[prolipoprotein] + sn-glycerol 1-phosphate + H(+). Its pathway is protein modification; lipoprotein biosynthesis (diacylglyceryl transfer). Catalyzes the transfer of the diacylglyceryl group from phosphatidylglycerol to the sulfhydryl group of the N-terminal cysteine of a prolipoprotein, the first step in the formation of mature lipoproteins. The sequence is that of Phosphatidylglycerol--prolipoprotein diacylglyceryl transferase from Limosilactobacillus reuteri (strain DSM 20016) (Lactobacillus reuteri).